Here is a 386-residue protein sequence, read N- to C-terminus: Heat-inducible transcription repressor HrcA (386 aa).

This sequence belongs to the HrcA family.

Functionally, negative regulator of class I heat shock genes (grpE-dnaK-dnaJ and groELS operons). Prevents heat-shock induction of these operons. In Chlamydia abortus (strain DSM 27085 / S26/3) (Chlamydophila abortus), this protein is Heat-inducible transcription repressor HrcA.